A 246-amino-acid chain; its full sequence is Small ribosomal subunit protein uS2 (246 aa).

It belongs to the universal ribosomal protein uS2 family.

This chain is Small ribosomal subunit protein uS2, found in Lachnoclostridium phytofermentans (strain ATCC 700394 / DSM 18823 / ISDg) (Clostridium phytofermentans).